We begin with the raw amino-acid sequence, 128 residues long: Ribonuclease P protein component (128 aa).

It belongs to the RnpA family. Consists of a catalytic RNA component (M1 or rnpB) and a protein subunit.

The enzyme catalyses Endonucleolytic cleavage of RNA, removing 5'-extranucleotides from tRNA precursor.. RNaseP catalyzes the removal of the 5'-leader sequence from pre-tRNA to produce the mature 5'-terminus. It can also cleave other RNA substrates such as 4.5S RNA. The protein component plays an auxiliary but essential role in vivo by binding to the 5'-leader sequence and broadening the substrate specificity of the ribozyme. The chain is Ribonuclease P protein component from Prochlorococcus marinus (strain MIT 9215).